A 361-amino-acid polypeptide reads, in one-letter code: MILDSTLREGEQTPGVNYSPEQRLRIALALDEIGVDFIEVGHPAVSKDVFIGIKLIASQDLNANLLAHSRALLEDIDYVIQADVEWVGIFFCLSNACLRKRFRMSLSQALERISKAIEYAKDHGLKVRFTPEDTTRTEWENLRRAIELAKELKVDRISVADTTGGTHPLRFYTLVKKVVNFGIPVNVHCHNDLGLALANAIMGIEGGATVVDATVNGLGERAGIVDLAQIVTVLYYHYGVKKYRLDKLYEISRMVSEITGIALQPNYPIVGENAFTHKAGLHVSAVLKDPRFYEFLPAEVFGRERTIYVDRFAGKDTIRYYLQKLGINDEEFVKVLLKRVKSSREPFTWDKFIEEVRRLKT.

Residues 1–249 (MILDSTLREG…VKKYRLDKLY (249 aa)) enclose the Pyruvate carboxyltransferase domain. Residue arginine 8 participates in 2-oxoglutarate binding. Glutamate 9 is a Mg(2+) binding site. 2-oxoglutarate-binding residues include histidine 68, arginine 128, and threonine 162. Histidine 188 and histidine 190 together coordinate Mg(2+). The Proton acceptor role is filled by histidine 282.

The protein belongs to the alpha-IPM synthase/homocitrate synthase family. Homocitrate synthase LYS20/LYS21 subfamily. Mg(2+) serves as cofactor. Mn(2+) is required as a cofactor.

The catalysed reaction is acetyl-CoA + 2-oxoglutarate + H2O = (2R)-homocitrate + CoA + H(+). It participates in amino-acid biosynthesis; L-lysine biosynthesis via AAA pathway; L-alpha-aminoadipate from 2-oxoglutarate: step 1/5. Catalyzes the aldol-type condensation of 2-oxoglutarate with acetyl-CoA to yield homocitrate. Carries out the first step of the alpha-aminoadipate (AAA) lysine biosynthesis pathway. The polypeptide is Homocitrate synthase (Pyrococcus horikoshii (strain ATCC 700860 / DSM 12428 / JCM 9974 / NBRC 100139 / OT-3)).